A 188-amino-acid polypeptide reads, in one-letter code: Ribosome maturation factor RimM (188 aa).

Positions 93–166 constitute a PRC barrel domain; the sequence is EDEYYDHQLI…RAVIDPPPGL (74 aa).

It belongs to the RimM family. In terms of assembly, binds ribosomal protein uS19.

It is found in the cytoplasm. Functionally, an accessory protein needed during the final step in the assembly of 30S ribosomal subunit, possibly for assembly of the head region. Essential for efficient processing of 16S rRNA. May be needed both before and after RbfA during the maturation of 16S rRNA. It has affinity for free ribosomal 30S subunits but not for 70S ribosomes. This Streptomyces coelicolor (strain ATCC BAA-471 / A3(2) / M145) protein is Ribosome maturation factor RimM.